The chain runs to 548 residues: DNA ligase (548 aa).

Glu-244 provides a ligand contact to ATP. The active-site N6-AMP-lysine intermediate is the Lys-246. ATP is bound by residues Arg-251, Arg-266, Glu-295, Phe-334, Arg-405, and Lys-411.

The protein belongs to the ATP-dependent DNA ligase family. Requires Mg(2+) as cofactor.

It carries out the reaction ATP + (deoxyribonucleotide)n-3'-hydroxyl + 5'-phospho-(deoxyribonucleotide)m = (deoxyribonucleotide)n+m + AMP + diphosphate.. DNA ligase that seals nicks in double-stranded DNA during DNA replication, DNA recombination and DNA repair. This Methanoculleus marisnigri (strain ATCC 35101 / DSM 1498 / JR1) protein is DNA ligase.